Reading from the N-terminus, the 1529-residue chain is ABC multidrug transporter AFR2 (1529 aa).

In terms of domain architecture, ABC transporter 1 spans 144 to 394 (GSLRDLIGNR…FVDMGFHCPS (251 aa)). Asparagine 235 and asparagine 318 each carry an N-linked (GlcNAc...) asparagine glycan. Helical transmembrane passes span 510 to 530 (LFGN…LPVT), 539 to 559 (ALLF…ILIL), 589 to 609 (IPYK…MTNL), 614 to 634 (GAYF…SMLF), and 648 to 668 (LAPA…AVNV). Asparagine 742 carries an N-linked (GlcNAc...) asparagine glycan. A helical membrane pass occupies residues 757–777 (GILIGFFLFFTAIYLTATEFI). The ABC transporter 2 domain maps to 845-1087 (FSWKDVVYDI…ILIDYFEKNG (243 aa)). 881-888 (GVSGAGKT) provides a ligand contact to ATP. 5 consecutive transmembrane segments (helical) span residues 1193-1213 (YIWA…FSFF), 1229-1249 (VFMM…NFVT), 1268-1288 (IFIL…GVII), 1314-1334 (LMFL…IMIV), and 1353-1373 (MCLI…FWVF). Asparagine 1434 is a glycosylation site (N-linked (GlcNAc...) asparagine). Residues 1465–1485 (FGLLWVYVVFNVIAAIGIYWL) form a helical membrane-spanning segment. The segment covering 1493–1505 (GKERASEPEDVQE) has biased composition (basic and acidic residues). A disordered region spans residues 1493 to 1529 (GKERASEPEDVQEKQVPAQSTEKKYQSISRSSESTVA). Residues 1518–1529 (QSISRSSESTVA) are compositionally biased toward polar residues.

It belongs to the ABC transporter superfamily. ABCG family. PDR (TC 3.A.1.205) subfamily.

The protein localises to the cell membrane. The catalysed reaction is itraconazole(in) + ATP + H2O = itraconazole(out) + ADP + phosphate + H(+). It catalyses the reaction voriconazole(in) + ATP + H2O = voriconazole(out) + ADP + phosphate + H(+). It carries out the reaction fluconazole(in) + ATP + H2O = fluconazole(out) + ADP + phosphate + H(+). Functionally, pleiotropic ABC efflux transporter that confers resistance to structurally and functionally unrelated compounds including azoles such as fluconazole (FLC), itraconazole (ITC), posaconazole (POS), and voriconazole (VRC). This Cryptococcus deuterogattii (strain R265) (Cryptococcus gattii VGII (strain R265)) protein is ABC multidrug transporter AFR2.